The sequence spans 119 residues: Ribosome-binding factor A (119 aa).

Belongs to the RbfA family. Monomer. Binds 30S ribosomal subunits, but not 50S ribosomal subunits or 70S ribosomes.

The protein resides in the cytoplasm. Functionally, one of several proteins that assist in the late maturation steps of the functional core of the 30S ribosomal subunit. Associates with free 30S ribosomal subunits (but not with 30S subunits that are part of 70S ribosomes or polysomes). Required for efficient processing of 16S rRNA. May interact with the 5'-terminal helix region of 16S rRNA. This chain is Ribosome-binding factor A, found in Limosilactobacillus reuteri (strain DSM 20016) (Lactobacillus reuteri).